A 195-amino-acid polypeptide reads, in one-letter code: Obelin (195 aa).

The propeptide occupies 1-6 (MSSKYA). EF-hand domains follow at residues 17-52 (RWIK…DICA), 53-88 (KLEA…FPQF), 110-145 (LIRE…SGIS), and 146-181 (PSQE…FWYT). Ca(2+)-binding residues include D30, N32, N34, K36, and E41. Residues D123, D125, S127, T129, E134, D159, D161, S163, D165, and E170 each contribute to the Ca(2+) site.

Belongs to the aequorin family.

Functionally, ca(2+)-dependent bioluminescence photoprotein. Displays an emission peak at 470 nm (blue light). Trace amounts of calcium ion trigger the intramolecular oxidation of the chromophore, coelenterazine into coelenteramide and CO(2) with the concomitant emission of light. The polypeptide is Obelin (Obelia longissima (Black sea hydrozoan)).